A 270-amino-acid polypeptide reads, in one-letter code: Putative pyruvate, phosphate dikinase regulatory protein (270 aa).

151 to 158 provides a ligand contact to ADP; that stretch reads GVSRTSKT.

The protein belongs to the pyruvate, phosphate/water dikinase regulatory protein family. PDRP subfamily.

It carries out the reaction N(tele)-phospho-L-histidyl/L-threonyl-[pyruvate, phosphate dikinase] + ADP = N(tele)-phospho-L-histidyl/O-phospho-L-threonyl-[pyruvate, phosphate dikinase] + AMP + H(+). The catalysed reaction is N(tele)-phospho-L-histidyl/O-phospho-L-threonyl-[pyruvate, phosphate dikinase] + phosphate + H(+) = N(tele)-phospho-L-histidyl/L-threonyl-[pyruvate, phosphate dikinase] + diphosphate. Its function is as follows. Bifunctional serine/threonine kinase and phosphorylase involved in the regulation of the pyruvate, phosphate dikinase (PPDK) by catalyzing its phosphorylation/dephosphorylation. The chain is Putative pyruvate, phosphate dikinase regulatory protein from Ligilactobacillus salivarius (strain UCC118) (Lactobacillus salivarius).